A 159-amino-acid polypeptide reads, in one-letter code: UPF0178 protein AZC_4000 (159 aa).

Belongs to the UPF0178 family.

In Azorhizobium caulinodans (strain ATCC 43989 / DSM 5975 / JCM 20966 / LMG 6465 / NBRC 14845 / NCIMB 13405 / ORS 571), this protein is UPF0178 protein AZC_4000.